A 287-amino-acid chain; its full sequence is Large ribosomal subunit protein uL2 (287 aa).

The disordered stretch occupies residues 203-287; that stretch reads LSAGKAGRNR…SKRGRGGRES (85 aa). 2 stretches are compositionally biased toward basic residues: residues 209 to 220 and 258 to 287; these read GRNRWKGRRPKV and KTRK…GRES.

Belongs to the universal ribosomal protein uL2 family. In terms of assembly, part of the 50S ribosomal subunit. Forms a bridge to the 30S subunit in the 70S ribosome.

One of the primary rRNA binding proteins. Required for association of the 30S and 50S subunits to form the 70S ribosome, for tRNA binding and peptide bond formation. It has been suggested to have peptidyltransferase activity; this is somewhat controversial. Makes several contacts with the 16S rRNA in the 70S ribosome. This Nostoc sp. (strain PCC 7120 / SAG 25.82 / UTEX 2576) protein is Large ribosomal subunit protein uL2.